Consider the following 331-residue polypeptide: Glyceraldehyde-3-phosphate dehydrogenase 3 (331 aa).

NAD(+) contacts are provided by residues 11–12 (RI), D33, and E77. Position 148 is a phosphoserine (S148). 148–150 (SCT) contacts D-glyceraldehyde 3-phosphate. Residue C149 is the Nucleophile of the active site. S177 carries the phosphoserine modification. T179 contributes to the D-glyceraldehyde 3-phosphate binding site. S200 is subject to Phosphoserine. D-glyceraldehyde 3-phosphate is bound by residues 208-209 (TG) and R231. NAD(+) is bound at residue N313.

Belongs to the glyceraldehyde-3-phosphate dehydrogenase family. As to quaternary structure, homotetramer.

The protein localises to the cytoplasm. It catalyses the reaction D-glyceraldehyde 3-phosphate + phosphate + NAD(+) = (2R)-3-phospho-glyceroyl phosphate + NADH + H(+). It functions in the pathway carbohydrate degradation; glycolysis; pyruvate from D-glyceraldehyde 3-phosphate: step 1/5. In Kluyveromyces marxianus (Yeast), this protein is Glyceraldehyde-3-phosphate dehydrogenase 3.